Reading from the N-terminus, the 105-residue chain is Large ribosomal subunit protein uL24 (105 aa).

The protein belongs to the universal ribosomal protein uL24 family. Part of the 50S ribosomal subunit.

In terms of biological role, one of two assembly initiator proteins, it binds directly to the 5'-end of the 23S rRNA, where it nucleates assembly of the 50S subunit. One of the proteins that surrounds the polypeptide exit tunnel on the outside of the subunit. In Novosphingobium aromaticivorans (strain ATCC 700278 / DSM 12444 / CCUG 56034 / CIP 105152 / NBRC 16084 / F199), this protein is Large ribosomal subunit protein uL24.